A 603-amino-acid polypeptide reads, in one-letter code: Methionine--tRNA ligase (603 aa).

The short motif at 14–24 (PYANGPRHIGH) is the 'HIGH' region element. Zn(2+) is bound by residues Cys-146, Cys-149, Cys-159, and Cys-162. A 'KMSKS' region motif is present at residues 354–358 (KFSSS). Ser-357 serves as a coordination point for ATP.

This sequence belongs to the class-I aminoacyl-tRNA synthetase family. MetG type 1 subfamily. As to quaternary structure, monomer. Zn(2+) serves as cofactor.

The protein localises to the cytoplasm. It carries out the reaction tRNA(Met) + L-methionine + ATP = L-methionyl-tRNA(Met) + AMP + diphosphate. In terms of biological role, is required not only for elongation of protein synthesis but also for the initiation of all mRNA translation through initiator tRNA(fMet) aminoacylation. This Salinispora tropica (strain ATCC BAA-916 / DSM 44818 / JCM 13857 / NBRC 105044 / CNB-440) protein is Methionine--tRNA ligase.